A 142-amino-acid polypeptide reads, in one-letter code: Hemoglobin subunit alpha-1 (142 aa).

Residues 2–142 (VLSPADKTNI…VSTVLTSKYR (141 aa)) form the Globin domain. H59 provides a ligand contact to O2. H88 is a binding site for heme b.

It belongs to the globin family. Heterotetramer of two alpha chains and two beta chains. In terms of tissue distribution, red blood cells.

Functionally, involved in oxygen transport from the lung to the various peripheral tissues. The sequence is that of Hemoglobin subunit alpha-1 from Arctocephalus galapagoensis (Galapagoes fur seal).